The primary structure comprises 455 residues: uncharacterized protein (455 aa).

Low complexity predominate over residues Met1–Ser20. Disordered regions lie at residues Met1–Thr234 and Arg258–Lys304. 5 stretches are compositionally biased toward basic and acidic residues: residues Glu35–Gln46, Ser61–Ser75, Arg129–Asp143, Arg156–Arg166, and Pro173–Gly186. The segment covering Ser213–Arg224 has biased composition (polar residues). Low complexity predominate over residues Ala260–Ala271.

This is an uncharacterized protein from Arabidopsis thaliana (Mouse-ear cress).